Consider the following 621-residue polypeptide: Phytoene desaturase (621 aa).

Residues 1-23 (MPSTSKRPTAIVIGSGVGGVSTA) form the signal peptide. The segment at 394–425 (HASQAHQLSASRNGHISSASPPDQPGLTPTEK) is disordered. The segment covering 397-414 (QAHQLSASRNGHISSASP) has biased composition (polar residues). The chain crosses the membrane as a helical span at residues 598-618 (WEQWVSVLIYLLVGIFAWLWM).

This sequence belongs to the carotenoid/retinoid oxidoreductase family. Requires NAD(+) as cofactor.

It localises to the membrane. It catalyses the reaction 15-cis-phytoene + 5 A = all-trans-3,4-didehydrolycopene + 5 AH2. Its pathway is carotenoid biosynthesis; lycopene biosynthesis. In terms of biological role, phytoene desaturase involved in the carotenoid biosynthesis pathway. Converts phytoene into 3,4-didehydrolycopene via the intermediary of phytofluene, zeta-carotene, neurosporene and lycopene, by introducing up to five double bonds into phytoene. In Cercospora nicotianae (Barn spot disease fungus), this protein is Phytoene desaturase (PDH1).